The primary structure comprises 248 residues: ATP synthase subunit a, chloroplastic (248 aa).

The next 5 membrane-spanning stretches (helical) occupy residues 37–57 (GQVL…AFLG), 96–116 (VPFV…GALV), 135–155 (INTT…AGFH), 200–220 (LVVA…MMFL), and 221–241 (GLFT…AYIG).

The protein belongs to the ATPase A chain family. In terms of assembly, F-type ATPases have 2 components, CF(1) - the catalytic core - and CF(0) - the membrane proton channel. CF(1) has five subunits: alpha(3), beta(3), gamma(1), delta(1), epsilon(1). CF(0) has four main subunits: a, b, b' and c.

Its subcellular location is the plastid. The protein localises to the chloroplast thylakoid membrane. Its function is as follows. Key component of the proton channel; it plays a direct role in the translocation of protons across the membrane. The protein is ATP synthase subunit a, chloroplastic of Staurastrum punctulatum (Green alga).